The following is an 82-amino-acid chain: Conotoxin Gla-TxX (82 aa).

The N-terminal stretch at 1-25 (MSGHTSVSFLLLSIVALGMVATVIC) is a signal peptide. Glu-30, Glu-34, Glu-37, Glu-40, and Glu-41 each carry 4-carboxyglutamate. Asn-72 bears the Asparagine amide mark. Positions 77–82 (LIHMQK) are excised as a propeptide.

Contains 4 disulfide bonds. In terms of tissue distribution, expressed by the venom duct.

It is found in the secreted. In Conus textile (Cloth-of-gold cone), this protein is Conotoxin Gla-TxX.